Reading from the N-terminus, the 448-residue chain is RNA-binding protein 42 (448 aa).

Positions 1 to 29 (MAGAGPAPGLPGAGGPVVPGPGAGIPGKS) are disordered. At A2 the chain carries N-acetylalanine. The span at 11–27 (PGAGGPVVPGPGAGIPG) shows a compositional bias: gly residues. Position 132 is a phosphoserine (S132). An Asymmetric dimethylarginine modification is found at R149. The necessary for interaction with HNRNPK stretch occupies residues 204–448 (ELGLGLGLGL…QKEKKKLGLR (245 aa)). Positions 286-324 (LSLRPRPRPPRPEPPPGLMALEVPEPLSEDKKKGKPEKL) are disordered. The span at 313-324 (SEDKKKGKPEKL) shows a compositional bias: basic and acidic residues. The RRM domain occupies 349–427 (FRIFCGDLGN…RPIKLRKSMW (79 aa)).

The protein belongs to the RRM RBM42 family. In terms of assembly, interacts with HNRNPK.

Its subcellular location is the nucleus. The protein localises to the cytoplasm. Functionally, binds (via the RRM domain) to the 3'-untranslated region (UTR) of CDKN1A mRNA. The protein is RNA-binding protein 42 (RBM42) of Bos taurus (Bovine).